The chain runs to 59 residues: Small ribosomal subunit protein bS21 (59 aa).

The tract at residues 35–59 is disordered; that stretch reads REHYEKPSVKKKKKSEAAKRKKRNF. Basic residues predominate over residues 43–59; that stretch reads VKKKKKSEAAKRKKRNF.

This sequence belongs to the bacterial ribosomal protein bS21 family.

In Finegoldia magna (strain ATCC 29328 / DSM 20472 / WAL 2508) (Peptostreptococcus magnus), this protein is Small ribosomal subunit protein bS21.